An 880-amino-acid chain; its full sequence is Translation initiation factor IF-2 (880 aa).

Basic and acidic residues-rich tracts occupy residues Q180–K194 and L202–I228. The tract at residues Q180–N289 is disordered. Positions G249–G262 are enriched in basic residues. Positions S380–K549 constitute a tr-type G domain. The tract at residues G389–T396 is G1. G389 to T396 serves as a coordination point for GTP. Residues G414–H418 form a G2 region. The tract at residues D435–G438 is G3. GTP contacts are provided by residues D435–H439 and N489–D492. The interval N489–D492 is G4. Positions S525 to K527 are G5.

It belongs to the TRAFAC class translation factor GTPase superfamily. Classic translation factor GTPase family. IF-2 subfamily.

It localises to the cytoplasm. In terms of biological role, one of the essential components for the initiation of protein synthesis. Protects formylmethionyl-tRNA from spontaneous hydrolysis and promotes its binding to the 30S ribosomal subunits. Also involved in the hydrolysis of GTP during the formation of the 70S ribosomal complex. In Shewanella baltica (strain OS223), this protein is Translation initiation factor IF-2.